A 501-amino-acid chain; its full sequence is Cytochrome P450 6j1 (501 aa).

Cys444 contributes to the heme binding site.

This sequence belongs to the cytochrome P450 family. Heme is required as a cofactor.

The protein localises to the endoplasmic reticulum membrane. It localises to the microsome membrane. This is Cytochrome P450 6j1 (CYP6J1) from Blattella germanica (German cockroach).